The primary structure comprises 190 residues: Molybdenum cofactor guanylyltransferase (190 aa).

GTP is bound by residues 10–12, lysine 23, asparagine 51, aspartate 69, and aspartate 99; that span reads LAG. Residue aspartate 99 coordinates Mg(2+).

The protein belongs to the MobA family. Monomer. Mg(2+) serves as cofactor.

Its subcellular location is the cytoplasm. It carries out the reaction Mo-molybdopterin + GTP + H(+) = Mo-molybdopterin guanine dinucleotide + diphosphate. In terms of biological role, transfers a GMP moiety from GTP to Mo-molybdopterin (Mo-MPT) cofactor (Moco or molybdenum cofactor) to form Mo-molybdopterin guanine dinucleotide (Mo-MGD) cofactor. The sequence is that of Molybdenum cofactor guanylyltransferase from Mannheimia succiniciproducens (strain KCTC 0769BP / MBEL55E).